We begin with the raw amino-acid sequence, 361 residues long: Peptide chain release factor 1 (361 aa).

Glutamine 237 bears the N5-methylglutamine mark. A compositionally biased stretch (basic and acidic residues) spans 284–296 (EDEKRRSEEDSTR). The disordered stretch occupies residues 284-305 (EDEKRRSEEDSTRRNLVSSGDR).

It belongs to the prokaryotic/mitochondrial release factor family. Post-translationally, methylated by PrmC. Methylation increases the termination efficiency of RF1.

Its subcellular location is the cytoplasm. Its function is as follows. Peptide chain release factor 1 directs the termination of translation in response to the peptide chain termination codons UAG and UAA. In Shewanella piezotolerans (strain WP3 / JCM 13877), this protein is Peptide chain release factor 1.